The primary structure comprises 216 residues: Cytidylate kinase (216 aa).

ATP is bound at residue 7 to 15; the sequence is GPAGTGKST.

This sequence belongs to the cytidylate kinase family. Type 1 subfamily.

It is found in the cytoplasm. It catalyses the reaction CMP + ATP = CDP + ADP. The enzyme catalyses dCMP + ATP = dCDP + ADP. This chain is Cytidylate kinase, found in Chlamydia muridarum (strain MoPn / Nigg).